The primary structure comprises 78 residues: Cell division topological specificity factor (78 aa).

It belongs to the MinE family.

Prevents the cell division inhibition by proteins MinC and MinD at internal division sites while permitting inhibition at polar sites. This ensures cell division at the proper site by restricting the formation of a division septum at the midpoint of the long axis of the cell. This chain is Cell division topological specificity factor, found in Helicobacter hepaticus (strain ATCC 51449 / 3B1).